The primary structure comprises 335 residues: Ornithine carbamoyltransferase (335 aa).

Carbamoyl phosphate contacts are provided by residues 56–59, Gln-83, Arg-107, and 134–137; these read STRT and HPTQ. L-ornithine-binding positions include Asn-168, Asp-232, and 236-237; that span reads SM. Carbamoyl phosphate is bound by residues 274–275 and Arg-320; that span reads CL.

This sequence belongs to the aspartate/ornithine carbamoyltransferase superfamily. OTCase family.

It localises to the cytoplasm. The catalysed reaction is carbamoyl phosphate + L-ornithine = L-citrulline + phosphate + H(+). It participates in amino-acid biosynthesis; L-arginine biosynthesis; L-arginine from L-ornithine and carbamoyl phosphate: step 1/3. Functionally, reversibly catalyzes the transfer of the carbamoyl group from carbamoyl phosphate (CP) to the N(epsilon) atom of ornithine (ORN) to produce L-citrulline. The protein is Ornithine carbamoyltransferase of Yersinia pestis bv. Antiqua (strain Nepal516).